The chain runs to 367 residues: Chorismate synthase (367 aa).

Arg48 and Arg54 together coordinate NADP(+). FMN contacts are provided by residues 125 to 127 (RSS), 238 to 239 (NA), Gly278, 293 to 297 (KPTSS), and Arg319.

This sequence belongs to the chorismate synthase family. As to quaternary structure, homotetramer. The cofactor is FMNH2.

The enzyme catalyses 5-O-(1-carboxyvinyl)-3-phosphoshikimate = chorismate + phosphate. The protein operates within metabolic intermediate biosynthesis; chorismate biosynthesis; chorismate from D-erythrose 4-phosphate and phosphoenolpyruvate: step 7/7. In terms of biological role, catalyzes the anti-1,4-elimination of the C-3 phosphate and the C-6 proR hydrogen from 5-enolpyruvylshikimate-3-phosphate (EPSP) to yield chorismate, which is the branch point compound that serves as the starting substrate for the three terminal pathways of aromatic amino acid biosynthesis. This reaction introduces a second double bond into the aromatic ring system. This Xanthomonas campestris pv. campestris (strain B100) protein is Chorismate synthase.